The primary structure comprises 121 residues: uncharacterized protein (121 aa).

A signal peptide spans 1–19; that stretch reads MKKFALATIFALATTSAFA.

The protein to E.coli YgiW.

The protein localises to the periplasm. This is an uncharacterized protein from Haemophilus influenzae (strain ATCC 51907 / DSM 11121 / KW20 / Rd).